The primary structure comprises 466 residues: ATP synthase subunit beta (466 aa).

155–162 (GGAGVGKT) serves as a coordination point for ATP.

This sequence belongs to the ATPase alpha/beta chains family. In terms of assembly, F-type ATPases have 2 components, CF(1) - the catalytic core - and CF(0) - the membrane proton channel. CF(1) has five subunits: alpha(3), beta(3), gamma(1), delta(1), epsilon(1). CF(0) has three main subunits: a(1), b(2) and c(9-12). The alpha and beta chains form an alternating ring which encloses part of the gamma chain. CF(1) is attached to CF(0) by a central stalk formed by the gamma and epsilon chains, while a peripheral stalk is formed by the delta and b chains.

Its subcellular location is the cell inner membrane. The catalysed reaction is ATP + H2O + 4 H(+)(in) = ADP + phosphate + 5 H(+)(out). In terms of biological role, produces ATP from ADP in the presence of a proton gradient across the membrane. The catalytic sites are hosted primarily by the beta subunits. This is ATP synthase subunit beta from Aromatoleum aromaticum (strain DSM 19018 / LMG 30748 / EbN1) (Azoarcus sp. (strain EbN1)).